Consider the following 197-residue polypeptide: ATP-dependent Clp protease proteolytic subunit 1 (197 aa).

Catalysis depends on S88, which acts as the Nucleophile. Residue H113 is part of the active site.

The protein belongs to the peptidase S14 family. As to quaternary structure, fourteen ClpP subunits assemble into 2 heptameric rings which stack back to back to give a disk-like structure with a central cavity, resembling the structure of eukaryotic proteasomes.

The protein localises to the cytoplasm. The enzyme catalyses Hydrolysis of proteins to small peptides in the presence of ATP and magnesium. alpha-casein is the usual test substrate. In the absence of ATP, only oligopeptides shorter than five residues are hydrolyzed (such as succinyl-Leu-Tyr-|-NHMec, and Leu-Tyr-Leu-|-Tyr-Trp, in which cleavage of the -Tyr-|-Leu- and -Tyr-|-Trp bonds also occurs).. Functionally, cleaves peptides in various proteins in a process that requires ATP hydrolysis. Has a chymotrypsin-like activity. Plays a major role in the degradation of misfolded proteins. This is ATP-dependent Clp protease proteolytic subunit 1 from Leifsonia xyli subsp. xyli (strain CTCB07).